The chain runs to 595 residues: Aspartate--tRNA(Asp/Asn) ligase (595 aa).

L-aspartate is bound at residue E177. The interval 201–204 (QQFK) is aspartate. Position 223 (R223) interacts with L-aspartate. Residues 223–225 (RDE) and Q232 contribute to the ATP site. H455 contacts L-aspartate. E489 is a binding site for ATP. Residue R496 coordinates L-aspartate. ATP is bound at residue 542-545 (GLDR).

It belongs to the class-II aminoacyl-tRNA synthetase family. Type 1 subfamily. As to quaternary structure, homodimer.

Its subcellular location is the cytoplasm. The catalysed reaction is tRNA(Asx) + L-aspartate + ATP = L-aspartyl-tRNA(Asx) + AMP + diphosphate. Functionally, aspartyl-tRNA synthetase with relaxed tRNA specificity since it is able to aspartylate not only its cognate tRNA(Asp) but also tRNA(Asn). Reaction proceeds in two steps: L-aspartate is first activated by ATP to form Asp-AMP and then transferred to the acceptor end of tRNA(Asp/Asn). The protein is Aspartate--tRNA(Asp/Asn) ligase of Opitutus terrae (strain DSM 11246 / JCM 15787 / PB90-1).